The sequence spans 85 residues: UPF0291 protein str0508 (85 aa).

Residues 62-85 form a disordered region; it reads TPEKLRQVQREKGLHGRSLDDPES.

Belongs to the UPF0291 family.

It is found in the cytoplasm. This chain is UPF0291 protein str0508, found in Streptococcus thermophilus (strain CNRZ 1066).